A 260-amino-acid chain; its full sequence is RxLR effector protein BLR38 (260 aa).

Positions 1 to 18 (MHCTVFFLLIACAKSSYG) are cleaved as a signal peptide. Residues 46–49 (RLLR) carry the RxLR motif. The short motif at 136-148 (MPSSRKRPRALDE) is the Nuclear localuization signal (NLS) element.

The protein belongs to the RxLR effector family.

Its subcellular location is the secreted. The protein resides in the host nucleus. Its function is as follows. Secreted effector that triggers a robust hypersensitive response (HR) in Lactuca serriola LS102. The response to BLN06 was visible as strong necrosis. Although effector recognition is frequently associated with single dominant R gene loci, the recognition of BLR38 requires 2 unlinked loci that display incomplete dominance. The sequence is that of RxLR effector protein BLR38 from Bremia lactucae (Lettuce downy mildew).